Reading from the N-terminus, the 348-residue chain is sn-glycerol-3-phosphate import ATP-binding protein UgpC (348 aa).

The 232-residue stretch at 4-235 (IQLSNIKKQY…PETTFVADFI (232 aa)) folds into the ABC transporter domain. 37–44 (GPSGCGKS) serves as a coordination point for ATP.

It belongs to the ABC transporter superfamily. sn-glycerol-3-phosphate importer (TC 3.A.1.1.3) family. In terms of assembly, the complex is composed of two ATP-binding proteins (UgpC), two transmembrane proteins (UgpA and UgpE) and a solute-binding protein (UgpB).

It is found in the cell inner membrane. The catalysed reaction is sn-glycerol 3-phosphate(out) + ATP + H2O = sn-glycerol 3-phosphate(in) + ADP + phosphate + H(+). Functionally, part of the ABC transporter complex UgpBAEC involved in sn-glycerol-3-phosphate (G3P) import. Responsible for energy coupling to the transport system. This chain is sn-glycerol-3-phosphate import ATP-binding protein UgpC, found in Bartonella quintana (strain Toulouse) (Rochalimaea quintana).